Here is a 247-residue protein sequence, read N- to C-terminus: Probable transcriptional regulatory protein YPO2055/y2255/YP_1898 (247 aa).

This sequence belongs to the TACO1 family.

The protein localises to the cytoplasm. The protein is Probable transcriptional regulatory protein YPO2055/y2255/YP_1898 of Yersinia pestis.